Reading from the N-terminus, the 176-residue chain is MKFLFDLFPIILFFVAYKVWGIFTATAVAIGATLVQIAWVAFRHRKVDPMLWVSLGVVTVFGGATLVLHNDTFIKWKPTVLYWAFSVVLVVSALGFNKNLIEAMMGKQIQLPHRIWGQLNYVWAVFFVLLGILNLFVAYNFSTDAWVNFKLFGATGCLVVFIVGQSLWLSKYMKEE.

The next 5 helical transmembrane spans lie at 24–44 (TATA…AFRH), 49–69 (PMLW…LVLH), 76–96 (WKPT…ALGF), 121–141 (YVWA…AYNF), and 149–169 (FKLF…SLWL).

The protein belongs to the YciB family.

The protein resides in the cell inner membrane. Its function is as follows. Plays a role in cell envelope biogenesis, maintenance of cell envelope integrity and membrane homeostasis. The polypeptide is Inner membrane-spanning protein YciB (Paraburkholderia phymatum (strain DSM 17167 / CIP 108236 / LMG 21445 / STM815) (Burkholderia phymatum)).